A 221-amino-acid chain; its full sequence is uncharacterized protein (221 aa).

A run of 6 helical transmembrane segments spans residues 33 to 55 (YFLL…ISYI), 70 to 92 (FGYR…QKIV), 99 to 121 (LEML…FIII), 125 to 147 (YGAY…YTLL), 154 to 176 (YFND…SFWI), and 186 to 208 (IISM…ITLI).

The protein resides in the cell membrane. This is an uncharacterized protein from Aquifex aeolicus (strain VF5).